Reading from the N-terminus, the 366-residue chain is Phenylalanine--tRNA ligase alpha subunit (366 aa).

A Mg(2+)-binding site is contributed by Glu259.

Belongs to the class-II aminoacyl-tRNA synthetase family. Phe-tRNA synthetase alpha subunit type 1 subfamily. As to quaternary structure, tetramer of two alpha and two beta subunits. The cofactor is Mg(2+).

The protein localises to the cytoplasm. It catalyses the reaction tRNA(Phe) + L-phenylalanine + ATP = L-phenylalanyl-tRNA(Phe) + AMP + diphosphate + H(+). In Erythrobacter litoralis (strain HTCC2594), this protein is Phenylalanine--tRNA ligase alpha subunit.